The sequence spans 141 residues: Large ribosomal subunit protein uL11 (141 aa).

The protein belongs to the universal ribosomal protein uL11 family. In terms of assembly, part of the ribosomal stalk of the 50S ribosomal subunit. Interacts with L10 and the large rRNA to form the base of the stalk. L10 forms an elongated spine to which L12 dimers bind in a sequential fashion forming a multimeric L10(L12)X complex. One or more lysine residues are methylated.

In terms of biological role, forms part of the ribosomal stalk which helps the ribosome interact with GTP-bound translation factors. The protein is Large ribosomal subunit protein uL11 of Streptococcus agalactiae serotype Ia (strain ATCC 27591 / A909 / CDC SS700).